A 293-amino-acid chain; its full sequence is Digeranylgeranylglyceryl phosphate synthase (293 aa).

The next 7 helical transmembrane spans lie at 26–46, 50–70, 107–127, 140–160, 215–235, 237–257, and 273–293; these read LMYG…FSDL, LLGY…NDYF, FVAA…VSVL, FAGN…GSII, IASL…FLLP, FLFD…LIYV, and YRKV…AGAF.

The protein belongs to the UbiA prenyltransferase family. DGGGP synthase subfamily. It depends on Mg(2+) as a cofactor.

The protein resides in the cell membrane. It catalyses the reaction sn-3-O-(geranylgeranyl)glycerol 1-phosphate + (2E,6E,10E)-geranylgeranyl diphosphate = 2,3-bis-O-(geranylgeranyl)-sn-glycerol 1-phosphate + diphosphate. It participates in membrane lipid metabolism; glycerophospholipid metabolism. Functionally, prenyltransferase that catalyzes the transfer of the geranylgeranyl moiety of geranylgeranyl diphosphate (GGPP) to the C2 hydroxyl of (S)-3-O-geranylgeranylglyceryl phosphate (GGGP). This reaction is the second ether-bond-formation step in the biosynthesis of archaeal membrane lipids. The chain is Digeranylgeranylglyceryl phosphate synthase from Archaeoglobus fulgidus (strain ATCC 49558 / DSM 4304 / JCM 9628 / NBRC 100126 / VC-16).